The primary structure comprises 306 residues: Pyridoxal 5'-phosphate synthase subunit PdxS (306 aa).

Aspartate 36 is a binding site for D-ribose 5-phosphate. Lysine 93 (schiff-base intermediate with D-ribose 5-phosphate) is an active-site residue. Glycine 165 contacts D-ribose 5-phosphate. D-glyceraldehyde 3-phosphate is bound at residue arginine 177. Residues glycine 226 and glycine 247–serine 248 contribute to the D-ribose 5-phosphate site.

It belongs to the PdxS/SNZ family. In terms of assembly, in the presence of PdxT, forms a dodecamer of heterodimers.

It catalyses the reaction aldehydo-D-ribose 5-phosphate + D-glyceraldehyde 3-phosphate + L-glutamine = pyridoxal 5'-phosphate + L-glutamate + phosphate + 3 H2O + H(+). It participates in cofactor biosynthesis; pyridoxal 5'-phosphate biosynthesis. Its function is as follows. Catalyzes the formation of pyridoxal 5'-phosphate from ribose 5-phosphate (RBP), glyceraldehyde 3-phosphate (G3P) and ammonia. The ammonia is provided by the PdxT subunit. Can also use ribulose 5-phosphate and dihydroxyacetone phosphate as substrates, resulting from enzyme-catalyzed isomerization of RBP and G3P, respectively. This chain is Pyridoxal 5'-phosphate synthase subunit PdxS, found in Salinispora tropica (strain ATCC BAA-916 / DSM 44818 / JCM 13857 / NBRC 105044 / CNB-440).